The sequence spans 258 residues: Na(+)-translocating NADH-quinone reductase subunit C (258 aa).

Residues 14 to 34 traverse the membrane as a helical segment; the sequence is LIVVLAVSLICSVIVAGAVVG. Ser226 carries the post-translational modification FMN phosphoryl serine.

This sequence belongs to the NqrC family. As to quaternary structure, composed of six subunits; NqrA, NqrB, NqrC, NqrD, NqrE and NqrF. It depends on FMN as a cofactor.

Its subcellular location is the cell inner membrane. The enzyme catalyses a ubiquinone + n Na(+)(in) + NADH + H(+) = a ubiquinol + n Na(+)(out) + NAD(+). Its function is as follows. NQR complex catalyzes the reduction of ubiquinone-1 to ubiquinol by two successive reactions, coupled with the transport of Na(+) ions from the cytoplasm to the periplasm. NqrA to NqrE are probably involved in the second step, the conversion of ubisemiquinone to ubiquinol. The polypeptide is Na(+)-translocating NADH-quinone reductase subunit C (Neisseria meningitidis serogroup A / serotype 4A (strain DSM 15465 / Z2491)).